Consider the following 350-residue polypeptide: S-adenosylmethionine:tRNA ribosyltransferase-isomerase (350 aa).

It belongs to the QueA family. In terms of assembly, monomer.

It localises to the cytoplasm. It carries out the reaction 7-aminomethyl-7-carbaguanosine(34) in tRNA + S-adenosyl-L-methionine = epoxyqueuosine(34) in tRNA + adenine + L-methionine + 2 H(+). The protein operates within tRNA modification; tRNA-queuosine biosynthesis. In terms of biological role, transfers and isomerizes the ribose moiety from AdoMet to the 7-aminomethyl group of 7-deazaguanine (preQ1-tRNA) to give epoxyqueuosine (oQ-tRNA). The sequence is that of S-adenosylmethionine:tRNA ribosyltransferase-isomerase from Bacillus cereus (strain ZK / E33L).